The chain runs to 377 residues: UPF0754 membrane protein BPUM_0927 (377 aa).

The next 2 membrane-spanning stretches (helical) occupy residues 1 to 21 (MNIF…GAAT) and 357 to 377 (FLGG…VTLF).

The protein belongs to the UPF0754 family.

It is found in the cell membrane. This chain is UPF0754 membrane protein BPUM_0927, found in Bacillus pumilus (strain SAFR-032).